We begin with the raw amino-acid sequence, 444 residues long: Exodeoxyribonuclease 7 large subunit (444 aa).

Belongs to the XseA family. In terms of assembly, heterooligomer composed of large and small subunits.

The protein resides in the cytoplasm. It catalyses the reaction Exonucleolytic cleavage in either 5'- to 3'- or 3'- to 5'-direction to yield nucleoside 5'-phosphates.. Its function is as follows. Bidirectionally degrades single-stranded DNA into large acid-insoluble oligonucleotides, which are then degraded further into small acid-soluble oligonucleotides. This Rickettsia akari (strain Hartford) protein is Exodeoxyribonuclease 7 large subunit.